The following is a 215-amino-acid chain: Oligoribonuclease (215 aa).

The 166-residue stretch at 5–170 (LVWIDCEMTG…ADIHESIREL (166 aa)) folds into the Exonuclease domain. The active site involves Tyr-127. The interval 196–215 (LGPPGKDAADTDSAAGHTTG) is disordered.

Belongs to the oligoribonuclease family.

The protein localises to the cytoplasm. Functionally, 3'-to-5' exoribonuclease specific for small oligoribonucleotides. This is Oligoribonuclease from Mycobacterium sp. (strain JLS).